The sequence spans 171 residues: Shikimate kinase (171 aa).

ATP is bound at residue glycine 14–threonine 19. Serine 18 lines the Mg(2+) pocket. Residues aspartate 36, arginine 60, and glycine 82 each contribute to the substrate site. Residue arginine 120 coordinates ATP. Arginine 139 contacts substrate. Glutamine 156 provides a ligand contact to ATP.

This sequence belongs to the shikimate kinase family. Monomer. Requires Mg(2+) as cofactor.

The protein localises to the cytoplasm. It catalyses the reaction shikimate + ATP = 3-phosphoshikimate + ADP + H(+). It functions in the pathway metabolic intermediate biosynthesis; chorismate biosynthesis; chorismate from D-erythrose 4-phosphate and phosphoenolpyruvate: step 5/7. Catalyzes the specific phosphorylation of the 3-hydroxyl group of shikimic acid using ATP as a cosubstrate. This chain is Shikimate kinase, found in Psychromonas ingrahamii (strain DSM 17664 / CCUG 51855 / 37).